The sequence spans 229 residues: Large ribosomal subunit protein uL1 (229 aa).

It belongs to the universal ribosomal protein uL1 family. In terms of assembly, part of the 50S ribosomal subunit.

Binds directly to 23S rRNA. The L1 stalk is quite mobile in the ribosome, and is involved in E site tRNA release. Functionally, protein L1 is also a translational repressor protein, it controls the translation of the L11 operon by binding to its mRNA. This chain is Large ribosomal subunit protein uL1, found in Ureaplasma parvum serovar 3 (strain ATCC 27815 / 27 / NCTC 11736).